The chain runs to 321 residues: DNA-directed RNA polymerase subunit alpha (321 aa).

An alpha N-terminal domain (alpha-NTD) region spans residues 1–235 (MAYQIECLET…DLFSPLKEVP (235 aa)). The tract at residues 252-321 (QIPIEQLNLS…TLPPQKAARN (70 aa)) is alpha C-terminal domain (alpha-CTD).

Belongs to the RNA polymerase alpha chain family. As to quaternary structure, homodimer. In cyanobacteria the RNAP catalytic core is composed of 2 alpha, 1 beta, 1 beta', 1 gamma and 1 omega subunit. When a sigma factor is associated with the core the holoenzyme is formed, which can initiate transcription.

The catalysed reaction is RNA(n) + a ribonucleoside 5'-triphosphate = RNA(n+1) + diphosphate. Its function is as follows. DNA-dependent RNA polymerase catalyzes the transcription of DNA into RNA using the four ribonucleoside triphosphates as substrates. This chain is DNA-directed RNA polymerase subunit alpha, found in Thermosynechococcus vestitus (strain NIES-2133 / IAM M-273 / BP-1).